Reading from the N-terminus, the 445-residue chain is tRNA-2-methylthio-N(6)-dimethylallyladenosine synthase (445 aa).

Residues 7-121 (KHFYIKSFGC…LPELIEKAAS (115 aa)) enclose the MTTase N-terminal domain. Cysteine 16, cysteine 52, cysteine 84, cysteine 156, cysteine 160, and cysteine 163 together coordinate [4Fe-4S] cluster. A Radical SAM core domain is found at 142–374 (RQVGASAFLT…QALLNQQQFD (233 aa)). The TRAM domain maps to 377–438 (QQTIGRKATV…PNSVKGQFLD (62 aa)).

This sequence belongs to the methylthiotransferase family. MiaB subfamily. In terms of assembly, monomer. It depends on [4Fe-4S] cluster as a cofactor.

The protein localises to the cytoplasm. The enzyme catalyses N(6)-dimethylallyladenosine(37) in tRNA + (sulfur carrier)-SH + AH2 + 2 S-adenosyl-L-methionine = 2-methylsulfanyl-N(6)-dimethylallyladenosine(37) in tRNA + (sulfur carrier)-H + 5'-deoxyadenosine + L-methionine + A + S-adenosyl-L-homocysteine + 2 H(+). Its function is as follows. Catalyzes the methylthiolation of N6-(dimethylallyl)adenosine (i(6)A), leading to the formation of 2-methylthio-N6-(dimethylallyl)adenosine (ms(2)i(6)A) at position 37 in tRNAs that read codons beginning with uridine. The polypeptide is tRNA-2-methylthio-N(6)-dimethylallyladenosine synthase (Zymomonas mobilis subsp. mobilis (strain ATCC 31821 / ZM4 / CP4)).